The following is a 148-amino-acid chain: Large ribosomal subunit protein bL9 (148 aa).

Belongs to the bacterial ribosomal protein bL9 family.

Its function is as follows. Binds to the 23S rRNA. This chain is Large ribosomal subunit protein bL9, found in Acidithiobacillus ferrooxidans (strain ATCC 23270 / DSM 14882 / CIP 104768 / NCIMB 8455) (Ferrobacillus ferrooxidans (strain ATCC 23270)).